Consider the following 623-residue polypeptide: uncharacterized protein (623 aa).

Helical transmembrane passes span 242-262, 288-308, 318-338, 361-381, and 387-407; these read IALA…ITWL, IVSP…LDIF, VSMW…IALF, VINL…LLGV, and FNVS…ALAV.

This sequence belongs to the MscS (TC 1.A.23) family.

It localises to the cell membrane. This is an uncharacterized protein from Helicobacter pylori (strain J99 / ATCC 700824) (Campylobacter pylori J99).